The following is a 425-amino-acid chain: Phosphoribosylamine--glycine ligase (425 aa).

Residues 109–315 form the ATP-grasp domain; it reads KALMQEAGIP…LEELILACVQ (207 aa). Residue 135-195 coordinates ATP; sequence IQAQGAPIVV…EECLTGQEVS (61 aa). Residues Glu285 and Asn287 each coordinate Mg(2+).

It belongs to the GARS family. It depends on Mg(2+) as a cofactor. Mn(2+) serves as cofactor.

The catalysed reaction is 5-phospho-beta-D-ribosylamine + glycine + ATP = N(1)-(5-phospho-beta-D-ribosyl)glycinamide + ADP + phosphate + H(+). Its pathway is purine metabolism; IMP biosynthesis via de novo pathway; N(1)-(5-phospho-D-ribosyl)glycinamide from 5-phospho-alpha-D-ribose 1-diphosphate: step 2/2. The polypeptide is Phosphoribosylamine--glycine ligase (Nostoc sp. (strain PCC 7120 / SAG 25.82 / UTEX 2576)).